A 109-amino-acid chain; its full sequence is Flagellar hook-basal body complex protein FliE (109 aa).

Residues 1–38 (MQAIHNDKSLLSPFSELNTDNRTKREESGSTFKEQKGG) form a disordered region. The span at 19 to 38 (TDNRTKREESGSTFKEQKGG) shows a compositional bias: basic and acidic residues.

This sequence belongs to the FliE family.

The protein resides in the bacterial flagellum basal body. This is Flagellar hook-basal body complex protein FliE from Helicobacter pylori (strain P12).